The chain runs to 239 residues: Prolyl hydroxylase EGLN3 (239 aa).

Residues 62–73 are beta(2)beta(3) 'finger-like' loop; the sequence is AGPRAGVSKRHL. Residues 88-104 form a required for interaction with ADRB2 region; sequence CEAISFLLSLIDRLVLY. Positions 116–214 constitute a Fe2OG dioxygenase domain; it reads ERSKAMVACY…RYAMTVWYFD (99 aa). Fe cation-binding residues include His-135, Asp-137, and His-196. Arg-205 is a 2-oxoglutarate binding site.

Interacts with BCL2 (via its BH4 domain); the interaction disrupts the BAX-BCL4 complex inhibiting the anti-apoptotic activity of BCL2. Interacts with WDR83; the interaction leads to almost complete elimination of HIF-mediated reporter activity. Interacts with ADRB2; the interaction hydroxylates ADRB2 facilitating its ubiquitination by the VHL-E3 ligase complex. Interacts with PAX2; the interaction targets PAX2 for destruction. Interacts with PKM; the interaction hydroxylates PKM in hypoxia. Interacts with LIMD1, WTIP and AJUBA. Fe(2+) serves as cofactor. Requires L-ascorbate as cofactor. In terms of processing, ubiquitinated by SIAH1 and/or SIAH2 in response to the unfolded protein response (UPR), leading to its degradation. Widely expressed at low levels. Expressed at higher levels in adult heart (cardiac myocytes, aortic endothelial cells and coronary artery smooth muscle), lung and placenta, and in fetal spleen, heart and skeletal muscle. Also expressed in pancreas. Localized to pancreatic acini and islet cells.

It localises to the nucleus. The protein localises to the cytoplasm. It catalyses the reaction L-prolyl-[protein] + 2-oxoglutarate + O2 = trans-4-hydroxy-L-prolyl-[protein] + succinate + CO2. The catalysed reaction is L-prolyl-[hypoxia-inducible factor alpha subunit] + 2-oxoglutarate + O2 = trans-4-hydroxy-L-prolyl-[hypoxia-inducible factor alpha subunit] + succinate + CO2. Activated in cardiovascular cells and Hela cells following exposure to hypoxia. Inhibited by polynitrogen compounds probably by chelation to Fe(2+) ions. Its function is as follows. Prolyl hydroxylase that mediates hydroxylation of proline residues in target proteins, such as PKM, TELO2, ATF4 and HIF1A. Target proteins are preferentially recognized via a LXXLAP motif. Cellular oxygen sensor that catalyzes, under normoxic conditions, the post-translational formation of 4-hydroxyproline in hypoxia-inducible factor (HIF) alpha proteins. Hydroxylates a specific proline found in each of the oxygen-dependent degradation (ODD) domains (N-terminal, NODD, and C-terminal, CODD) of HIF1A. Also hydroxylates HIF2A. Has a preference for the CODD site for both HIF1A and HIF2A. Hydroxylation on the NODD site by EGLN3 appears to require prior hydroxylation on the CODD site. Hydroxylated HIFs are then targeted for proteasomal degradation via the von Hippel-Lindau ubiquitination complex. Under hypoxic conditions, the hydroxylation reaction is attenuated allowing HIFs to escape degradation resulting in their translocation to the nucleus, heterodimerization with HIF1B, and increased expression of hypoxy-inducible genes. ELGN3 is the most important isozyme in limiting physiological activation of HIFs (particularly HIF2A) in hypoxia. Also hydroxylates PKM in hypoxia, limiting glycolysis. Under normoxia, hydroxylates and regulates the stability of ADRB2. Regulator of cardiomyocyte and neuronal apoptosis. In cardiomyocytes, inhibits the anti-apoptotic effect of BCL2 by disrupting the BAX-BCL2 complex. In neurons, has a NGF-induced proapoptotic effect, probably through regulating CASP3 activity. Also essential for hypoxic regulation of neutrophilic inflammation. Plays a crucial role in DNA damage response (DDR) by hydroxylating TELO2, promoting its interaction with ATR which is required for activation of the ATR/CHK1/p53 pathway. Also mediates hydroxylation of ATF4, leading to decreased protein stability of ATF4. This Homo sapiens (Human) protein is Prolyl hydroxylase EGLN3.